The following is a 66-amino-acid chain: Large ribosomal subunit protein bL28 (66 aa).

A disordered region spans residues 1 to 26 (MAKDAITGARTRFGNQRSHALNSSRR). The segment covering 13-25 (FGNQRSHALNSSR) has biased composition (polar residues).

It belongs to the bacterial ribosomal protein bL28 family.

This is Large ribosomal subunit protein bL28 from Leuconostoc citreum (strain KM20).